The primary structure comprises 1023 residues: 2-oxoglutarate dehydrogenase complex component E1 (1023 aa).

The transit peptide at 1–40 directs the protein to the mitochondrion; that stretch reads MFHLRTCAAKLRPLTASQTVKTFSQNKPAAIRTFQQIRCY. Lysine 74 is subject to N6-succinyllysine. Serine 100 bears the Phosphoserine mark. Ca(2+)-binding residues include histidine 143, aspartate 156, and aspartate 158. Arginine 312 serves as a coordination point for thiamine diphosphate. Lysine 401 bears the N6-acetyllysine mark. Aspartate 411, asparagine 444, and isoleucine 446 together coordinate thiamine diphosphate. The Mg(2+) site is built by aspartate 411, asparagine 444, and isoleucine 446. Lysine 534 is covalently cross-linked (Glycyl lysine isopeptide (Lys-Gly) (interchain with G-Cter in ubiquitin)). At lysine 564 the chain carries N6-succinyllysine. Glutamine 676 is a thiamine diphosphate binding site. Residues 933 to 939 form a recognized by alloreactive CD8 cytotoxic T-lymphocytes in association with a class I MHC protein region; that stretch reads LSPFPFD. Residue lysine 970 is modified to N6-acetyllysine.

The protein belongs to the alpha-ketoglutarate dehydrogenase family. As to quaternary structure, homodimer. The 2-oxoglutarate dehydrogenase complex is composed of OGDH (2-oxoglutarate dehydrogenase; E1), DLST (dihydrolipoamide succinyltransferase; E2), DLD (dihydrolipoamide dehydrogenase; E3) and the assembly factor KGD4. It contains multiple copies of the three enzymatic components (E1, E2 and E3). In the nucleus, the 2-oxoglutarate dehydrogenase complex associates with KAT2A. Interacts with ABHD11; this interaction maintains the functional lipoylation of the 2-oxoglutarate dehydrogenase complex. Thiamine diphosphate is required as a cofactor. Mg(2+) serves as cofactor.

The protein resides in the mitochondrion. It is found in the nucleus. The enzyme catalyses N(6)-[(R)-lipoyl]-L-lysyl-[protein] + 2-oxoglutarate + H(+) = N(6)-[(R)-S(8)-succinyldihydrolipoyl]-L-lysyl-[protein] + CO2. Calcium ions and ADP stimulate, whereas ATP and NADH reduce catalytic activity. Functionally, 2-oxoglutarate dehydrogenase (E1o) component of the 2-oxoglutarate dehydrogenase complex (OGDHC). Participates in the first step, rate limiting for the overall conversion of 2-oxoglutarate to succinyl-CoA and CO(2) catalyzed by the whole OGDHC. Catalyzes the irreversible decarboxylation of 2-oxoglutarate (alpha-ketoglutarate) via the thiamine diphosphate (ThDP) cofactor and subsequent transfer of the decarboxylated acyl intermediate on an oxidized dihydrolipoyl group that is covalently amidated to the E2 enzyme (dihydrolipoyllysine-residue succinyltransferase or DLST). Plays a key role in the Krebs (citric acid) cycle, which is a common pathway for oxidation of fuel molecules, including carbohydrates, fatty acids, and amino acids. Can catalyze the decarboxylation of 2-oxoadipate in vitro, but at a much lower rate than 2-oxoglutarate. Mainly active in the mitochondrion. A fraction of the 2-oxoglutarate dehydrogenase complex also localizes in the nucleus and is required for lysine succinylation of histones: associates with KAT2A on chromatin and provides succinyl-CoA to histone succinyltransferase KAT2A. This Mus musculus (Mouse) protein is 2-oxoglutarate dehydrogenase complex component E1.